The chain runs to 246 residues: Complement C1q subcomponent subunit C (246 aa).

An N-terminal signal peptide occupies residues 1–29 (MVVGPSCQPPCGLCLLLLFLLALPLRSQA). Residues 32–113 (GCYGIPGMPG…GPPGEPGVEG (82 aa)) form the Collagen-like domain. Pro-37, Pro-40, Pro-43, Pro-46, and Pro-64 each carry 4-hydroxyproline. The disordered stretch occupies residues 44–116 (GAPGKDGHDG…GEPGVEGRYK (73 aa)). The residue at position 76 (Lys-76) is a 5-hydroxylysine. Lys-76 is a glycosylation site (O-linked (Gal...) hydroxylysine). 4 positions are modified to 4-hydroxyproline: Pro-82, Pro-97, Pro-100, and Pro-106. The span at 99–108 (DPGPRGPPGE) shows a compositional bias: pro residues. Residues 116–246 (KQKHQSVFTV…VFSGFLLFPD (131 aa)) form the C1q domain. A disulfide bridge links Cys-180 with Cys-194.

As to quaternary structure, core component of the complement C1 complex, a calcium-dependent complex composed of 1 molecule of the C1Q subcomplex, 2 molecules of C1R and 2 molecules of C1S. The C1Q subcomplex is composed 18 subunits: 3 chains of C1QA, C1QB, and C1QC trimerize to form 6 collagen-like triple helices connected to six globular ligand-recognition modules (C1q domain). O-linked glycans consist of Glc-Gal disaccharides bound to the oxygen atom of post-translationally added hydroxyl groups.

The protein resides in the secreted. It localises to the cell surface. With respect to regulation, the C1Q subcomplex is inhibited by sulfated molecules, such as triterpenoid sulfates, heparan sulfate, or chondroitin sulfates. Functionally, core component of the complement C1 complex, a multiprotein complex that initiates the classical pathway of the complement system, a cascade of proteins that leads to phagocytosis and breakdown of pathogens and signaling that strengthens the adaptive immune system. The classical complement pathway is initiated by the C1Q subcomplex of the C1 complex, which specifically binds IgG or IgM immunoglobulins complexed with antigens, forming antigen-antibody complexes on the surface of pathogens: C1QA, together with C1QB and C1QC, specifically recognizes and binds the Fc regions of IgG or IgM via its C1q domain. Immunoglobulin-binding activates the proenzyme C1R, which cleaves C1S, initiating the proteolytic cascade of the complement system. The C1Q subcomplex is activated by a hexamer of IgG complexed with antigens, while it is activated by a pentameric IgM. The C1Q subcomplex also recognizes and binds phosphatidylserine exposed on the surface of cells undergoing programmed cell death, possibly promoting activation of the complement system. The polypeptide is Complement C1q subcomponent subunit C (Mus musculus (Mouse)).